Here is a 294-residue protein sequence, read N- to C-terminus: Large ribosomal subunit protein uL2 (294 aa).

Disordered regions lie at residues 1–37 (MGIR…RPEK) and 228–294 (GSVM…RAAQ). Residues 23–37 (ELSRDENGKRPRPEK) are compositionally biased toward basic and acidic residues. Basic residues predominate over residues 264–285 (KTRKRNKPSNKFIVRGRRRGGR).

Belongs to the universal ribosomal protein uL2 family. Part of the 50S ribosomal subunit. Forms a bridge to the 30S subunit in the 70S ribosome.

Its function is as follows. One of the primary rRNA binding proteins. Required for association of the 30S and 50S subunits to form the 70S ribosome, for tRNA binding and peptide bond formation. It has been suggested to have peptidyltransferase activity; this is somewhat controversial. Makes several contacts with the 16S rRNA in the 70S ribosome. In Synechococcus sp. (strain JA-2-3B'a(2-13)) (Cyanobacteria bacterium Yellowstone B-Prime), this protein is Large ribosomal subunit protein uL2.